The chain runs to 526 residues: MDSESESESNPSTTDEFDRFLDAPDEFYYDCLPIRSNSHQPSSLLRRRKSAHRRDLISSDIETEPSSSSDGFDVGEKSSYVEKNAELRGDIDTSDVIESTKDSIDLSSEKENDLDVISSSGNDMDVIDSGRNRVDPFQEESTVTTVSSDDQGDDDYAGSVPQFREPPNSTEWSLLGFLVGLVIKAIEFQVSFMTSLLTFPPWLLRNCFLFFFDPFSTIRFGRRFLMARVAGISDMIFGYMNPFRLKDTKQMLSIVCKFGWGMFWAVYVGIVLFGLLVSSLMIGGYVINRIADKPFEVKETLNFDYTKNSPEAYVPISSCAGVECEGSCKESNEMSKIRGLRVIPRDQKLDIILSMTLPESAYNKNLGMFQVRVDFLSVDGQTIASIRRPCMLRFRSEPIRLVQTFFKVVPLVTGYVSEIQTLSLKLKGFVEKDIPTACLKIIIEQRAEFRPGAGIPELYDASLSVESGLPFFRKIIWKWRKTLFVWISMSLFITELLFTLVCCRPLIIPRTQPRDRSPSNPTGVWR.

The disordered stretch occupies residues 33–77 (PIRSNSHQPSSLLRRRKSAHRRDLISSDIETEPSSSSDGFDVGEK). Low complexity predominate over residues 58 to 70 (SSDIETEPSSSSD). The next 4 membrane-spanning stretches (helical) occupy residues 195 to 215 (SLLT…FDPF), 224 to 243 (FLMA…MNPF), 258 to 278 (FGWG…LLVS), and 483 to 503 (LFVW…LVCC).

Belongs to the seipin family. As to expression, expressed in seeds, seedlings, leaves, stems and roots. Not detected in flowers.

It is found in the endoplasmic reticulum membrane. Functionally, involved in lipid metabolism and lipid droplet (LD) morphology, number, and size. Supports the formation of small-sized LDs and modulates triacylglycerol accumulation. Induces probably a reorganization of the endoplasmic reticulum into LD-forming domains. The polypeptide is Seipin-2 (Arabidopsis thaliana (Mouse-ear cress)).